Reading from the N-terminus, the 351-residue chain is Protein-glutamate methylesterase/protein-glutamine glutaminase (351 aa).

A Response regulatory domain is found at 8-125 (TVVVVDDSLT…GEDPFAGLGD (118 aa)). Asp-59 is modified (4-aspartylphosphate). Residues 151 to 345 (PKIGTVVGIG…PAILNLCERR (195 aa)) enclose the CheB-type methylesterase domain. Active-site residues include Ser-162, His-188, and Asp-287.

It belongs to the CheB family. In terms of processing, phosphorylated by CheA. Phosphorylation of the N-terminal regulatory domain activates the methylesterase activity.

Its subcellular location is the cytoplasm. The enzyme catalyses [protein]-L-glutamate 5-O-methyl ester + H2O = L-glutamyl-[protein] + methanol + H(+). It catalyses the reaction L-glutaminyl-[protein] + H2O = L-glutamyl-[protein] + NH4(+). Its function is as follows. Involved in chemotaxis. Part of a chemotaxis signal transduction system that modulates chemotaxis in response to various stimuli. Catalyzes the demethylation of specific methylglutamate residues introduced into the chemoreceptors (methyl-accepting chemotaxis proteins or MCP) by CheR. Also mediates the irreversible deamidation of specific glutamine residues to glutamic acid. This chain is Protein-glutamate methylesterase/protein-glutamine glutaminase, found in Gluconobacter oxydans (strain 621H) (Gluconobacter suboxydans).